The chain runs to 344 residues: HTH-type transcriptional regulator MalR (344 aa).

Positions 1-54 (MTTRLADIAAQAGVSEATVSRVLNGKPGVAATTRQSVLAALDVLGYERPVRLRQ) constitute an HTH lacI-type domain. The H-T-H motif DNA-binding region spans 5 to 24 (LADIAAQAGVSEATVSRVLN).

In terms of biological role, transcriptional repressor of the maltosaccharide utilization operon malEFG. This chain is HTH-type transcriptional regulator MalR (malR), found in Streptomyces coelicolor (strain ATCC BAA-471 / A3(2) / M145).